The primary structure comprises 566 residues: MKISRHAYADTYGPTTGDRVRLADTDLWIKVERDLTTYGDEVKFGGGKVIRDGMGQSQLSRDQVMDLVITNALIVDHWGIIKADVGIKDGRIAAIGKAGNPDTQPNVDINIGAATEVIAGEGKILTAGGIDSHVHFICPQLVEEALTSGVTTLIGGGTGPATGTNATTCTPGSWNIGRMLQAADAFPINMGFLGKGNASLPQSLEEQVRAGVLGLKLHEDWGTTPAAIDNCLSVAERFDVQVTIHTDTLNESGFVEDTIAAFKDRTIHTYHTEGAGGGHAPDIIKACGEANVLPSSTNPTTPFTANTIDEHLDMLMVCHHLDPSIPEDVAFAESRIRRETISAEDALHDMGALSMHGSDSQAMGRVGEVILRTWQSASVMKRDRGTLPEDKGDHDNFRIKRYIAKYTINPAITHGIAHEIGSIEVGKLADLVLWKPAFFGVKPSLVLKGGVIVTAPMGDPNASIPTPQPVHYRPMFGSFGGSRTASCVSFVSQAGLDEGIGEKLGLQKRLVAVKNIRGLRKSDLIHNNALPRIEVDPQNYQVRADGQLLWFEPSKVLPMAQRYFLF.

The 439-residue stretch at 128–566 (GGIDSHVHFI…LPMAQRYFLF (439 aa)) folds into the Urease domain. Residues histidine 133, histidine 135, and lysine 216 each coordinate Ni(2+). At lysine 216 the chain carries N6-carboxylysine. A substrate-binding site is contributed by histidine 218. Ni(2+) contacts are provided by histidine 245 and histidine 271. The Proton donor role is filled by histidine 319. Aspartate 359 is a Ni(2+) binding site.

The protein belongs to the metallo-dependent hydrolases superfamily. Urease alpha subunit family. As to quaternary structure, heterotrimer of UreA (gamma), UreB (beta) and UreC (alpha) subunits. Three heterotrimers associate to form the active enzyme. It depends on Ni cation as a cofactor. Carboxylation allows a single lysine to coordinate two nickel ions.

The protein resides in the cytoplasm. The catalysed reaction is urea + 2 H2O + H(+) = hydrogencarbonate + 2 NH4(+). It functions in the pathway nitrogen metabolism; urea degradation; CO(2) and NH(3) from urea (urease route): step 1/1. The polypeptide is Urease subunit alpha (Nitrosococcus oceani (strain ATCC 19707 / BCRC 17464 / JCM 30415 / NCIMB 11848 / C-107)).